A 147-amino-acid chain; its full sequence is Lipoprotein signal peptidase (147 aa).

The next 4 helical transmembrane spans lie at 10-30 (ISIFLILLIDQITKYLAIKFL), 34-54 (GIVKLLPFLNLVYVENTGTAF), 59-79 (FLGSGFFIIIALVVTGFLVYM), and 87-107 (WFIYSLIIAGALGNIIDRLIY). Catalysis depends on residues Asp-112 and Asp-130. A helical membrane pass occupies residues 121–141 (LHWPAFNVADSAISIGIVLFV).

Belongs to the peptidase A8 family.

Its subcellular location is the cell inner membrane. It catalyses the reaction Release of signal peptides from bacterial membrane prolipoproteins. Hydrolyzes -Xaa-Yaa-Zaa-|-(S,diacylglyceryl)Cys-, in which Xaa is hydrophobic (preferably Leu), and Yaa (Ala or Ser) and Zaa (Gly or Ala) have small, neutral side chains.. It participates in protein modification; lipoprotein biosynthesis (signal peptide cleavage). Functionally, this protein specifically catalyzes the removal of signal peptides from prolipoproteins. The sequence is that of Lipoprotein signal peptidase from Thermodesulfovibrio yellowstonii (strain ATCC 51303 / DSM 11347 / YP87).